Consider the following 86-residue polypeptide: Exodeoxyribonuclease 7 small subunit (86 aa).

Residues 1 to 27 (MQDELFETEKIPPKNTKNAKNAPKKSF) form a disordered region.

Belongs to the XseB family. In terms of assembly, heterooligomer composed of large and small subunits.

It is found in the cytoplasm. It carries out the reaction Exonucleolytic cleavage in either 5'- to 3'- or 3'- to 5'-direction to yield nucleoside 5'-phosphates.. Bidirectionally degrades single-stranded DNA into large acid-insoluble oligonucleotides, which are then degraded further into small acid-soluble oligonucleotides. The chain is Exodeoxyribonuclease 7 small subunit from Helicobacter pylori (strain G27).